The following is a 280-amino-acid chain: Myb family transcription factor PHL11 (280 aa).

Residues 20-80 (RDPKPRLRWT…HLQKYRLGQQ (61 aa)) form the HTH myb-type domain. Positions 51 to 76 (PKSVLKLMGLKGLTLYHLKSHLQKYR) form a DNA-binding region, H-T-H motif. Residues 77–98 (LGQQQGKKQNRTEQNKENAGSS) are disordered. Residues 129–149 (AEAMRHQVDAQQRFQEQLEVQ) are coiled coil. Residues 142–147 (FQEQLE) carry the LHEQLE motif.

It belongs to the MYB-CC family.

The protein localises to the nucleus. The polypeptide is Myb family transcription factor PHL11 (Arabidopsis thaliana (Mouse-ear cress)).